The following is a 63-amino-acid chain: Conotoxin Cal6.28 (63 aa).

An N-terminal signal peptide occupies residues 1-22 (MKLTCVLIVAVLILTACQVIAA). Cystine bridges form between C34/C45, C37/C51, and C44/C58.

This sequence belongs to the conotoxin O1 superfamily. Expressed by the venom duct.

The protein localises to the secreted. In terms of biological role, probable neurotoxin. The polypeptide is Conotoxin Cal6.28 (Californiconus californicus (California cone)).